The chain runs to 253 residues: Ribosomal RNA small subunit methyltransferase G (253 aa).

Residues glycine 84, phenylalanine 89, alanine 135–glutamate 136, and arginine 154 each bind S-adenosyl-L-methionine. A disordered region spans residues threonine 228–arginine 253.

The protein belongs to the methyltransferase superfamily. RNA methyltransferase RsmG family.

Its subcellular location is the cytoplasm. Specifically methylates the N7 position of a guanine in 16S rRNA. This Deinococcus radiodurans (strain ATCC 13939 / DSM 20539 / JCM 16871 / CCUG 27074 / LMG 4051 / NBRC 15346 / NCIMB 9279 / VKM B-1422 / R1) protein is Ribosomal RNA small subunit methyltransferase G.